The chain runs to 631 residues: MATFIFSRGNIFFYVNKITIPDLMSDVLLSKLSTELADLDGEIGQIDQQISQLRRKKSELTQKRQAIERKIELKTNEDSDVVTDRWDRDGFPWSDEATKILKEQFHLEKFRPLQRAAINAVMSKEDAVVILSTGGGKSLCYQLPALLANGLALVVSPLISLVEDQILQLRSLGIDSSSLNANTSKEEAKRVEDAITNKDSKFRLLYVTPEKLAKSKKMMNKLEKSLSVGFLKLIAIDEVHCCSQWGHDFRTDYSFLNVLKRQFKGVPILGLTATATSNVLDDVKDMLGIQAALTFRAGFNRSNLKYKVVQKPGSEDECTEEIAKTIKRDFAGQTGIIYCLSRNDCEKVAKALKSHGIKAKHYHAYMEPVDRSGAHQGWISGKIQVIVATVAFGMGIDKPNVRFVIHHSLPKSIENYYQESGRAGRDGQPATCILYYRLADIFKQSSMVQQERTGIQNLYNMVRYAADSSTCRRVKLAEHFEEAWEPSWCQKQCDTCENGNGFVGTSSKESTDVSEAAKTTVRIIEEHLNSAKDGSGRITGNKLVELLTKKLKGSRNREFCEKLIVNLLLEGYLQEDFHYTVYSVISYVVIGSKWRVYNGKDAIKMRHVEESKSRKRKASSSVEEEDVMVLD.

A Helicase ATP-binding domain is found at 118–293 (INAVMSKEDA…KDMLGIQAAL (176 aa)). Position 131–138 (131–138 (LSTGGGKS)) interacts with ATP. Positions 237–240 (DEVH) match the DEVH box motif. Residues 318 to 466 (CTEEIAKTIK…NLYNMVRYAA (149 aa)) form the Helicase C-terminal domain. 4 residues coordinate Zn(2+): Cys-471, Cys-489, Cys-493, and Cys-496. The tract at residues 610–631 (ESKSRKRKASSSVEEEDVMVLD) is disordered. Residues 622–631 (VEEEDVMVLD) are compositionally biased toward acidic residues.

This sequence belongs to the helicase family. RecQ subfamily. It depends on Zn(2+) as a cofactor.

Its subcellular location is the nucleus. It catalyses the reaction Couples ATP hydrolysis with the unwinding of duplex DNA by translocating in the 3'-5' direction.. The enzyme catalyses ATP + H2O = ADP + phosphate + H(+). Its function is as follows. DNA helicase that may play a role in the repair of DNA that is damaged by ultraviolet light or other mutagens. Exhibits a magnesium-dependent ATP-dependent DNA-helicase activity that unwinds single- and double-stranded DNA in a 3'-5' direction. In Caenorhabditis elegans, this protein is Putative ATP-dependent DNA helicase Q1.